The sequence spans 82 residues: Large ribosomal subunit protein uL24c (82 aa).

This sequence belongs to the universal ribosomal protein uL24 family. Part of the 50S ribosomal subunit.

The protein resides in the plastid. It localises to the chloroplast. Its function is as follows. One of two assembly initiator proteins, it binds directly to the 5'-end of the 23S rRNA, where it nucleates assembly of the 50S subunit. This is Large ribosomal subunit protein uL24c (rpl24) from Phaeodactylum tricornutum (strain CCAP 1055/1).